Reading from the N-terminus, the 741-residue chain is NAD(P)H-quinone oxidoreductase subunit 5, chloroplastic (741 aa).

Transmembrane regions (helical) follow at residues 9–29 (WIIP…LLLF), 40–60 (WAFQ…NLSI), 89–109 (IDPL…MVLI), 125–145 (FAYM…SNLI), 147–167 (IYIF…FWFT), 185–205 (GDFG…SFEF), 219–239 (NEVN…GAIA), 258–278 (TPIS…FPVA), 284–304 (FIVI…TVFF), 327–347 (LGYM…FHLI), 354–374 (ALLF…VGYC), 396–416 (NSFL…CFWS), 425–445 (WLYS…TAFY), 549–569 (LFPI…GIPF), 605–625 (VFSV…YKPV), and 721–741 (YLFF…FLNL).

This sequence belongs to the complex I subunit 5 family. In terms of assembly, NDH is composed of at least 16 different subunits, 5 of which are encoded in the nucleus.

The protein localises to the plastid. It localises to the chloroplast thylakoid membrane. The enzyme catalyses a plastoquinone + NADH + (n+1) H(+)(in) = a plastoquinol + NAD(+) + n H(+)(out). It catalyses the reaction a plastoquinone + NADPH + (n+1) H(+)(in) = a plastoquinol + NADP(+) + n H(+)(out). Its function is as follows. NDH shuttles electrons from NAD(P)H:plastoquinone, via FMN and iron-sulfur (Fe-S) centers, to quinones in the photosynthetic chain and possibly in a chloroplast respiratory chain. The immediate electron acceptor for the enzyme in this species is believed to be plastoquinone. Couples the redox reaction to proton translocation, and thus conserves the redox energy in a proton gradient. This Guizotia abyssinica (Niger) protein is NAD(P)H-quinone oxidoreductase subunit 5, chloroplastic (ndhF).